Here is a 131-residue protein sequence, read N- to C-terminus: D-ribose pyranase (131 aa).

His-20 functions as the Proton donor in the catalytic mechanism. Residues Asp-28, His-98, and Tyr-120–Asn-122 contribute to the substrate site.

This sequence belongs to the RbsD / FucU family. RbsD subfamily. In terms of assembly, homodecamer.

The protein localises to the cytoplasm. It catalyses the reaction beta-D-ribopyranose = beta-D-ribofuranose. It participates in carbohydrate metabolism; D-ribose degradation; D-ribose 5-phosphate from beta-D-ribopyranose: step 1/2. In terms of biological role, catalyzes the interconversion of beta-pyran and beta-furan forms of D-ribose. The polypeptide is D-ribose pyranase (Clostridium novyi (strain NT)).